Reading from the N-terminus, the 461-residue chain is Bifunctional protein GlmU (461 aa).

Residues 1-232 (MNLQIIILAA…SFEVQGINNR (232 aa)) form a pyrophosphorylase region. Residues 8–11 (LAAG), Lys22, Gln73, and 78–79 (GT) contribute to the UDP-N-acetyl-alpha-D-glucosamine site. Asp102 provides a ligand contact to Mg(2+). The UDP-N-acetyl-alpha-D-glucosamine site is built by Gly142, Glu157, and Asn230. Asn230 contributes to the Mg(2+) binding site. Residues 233–253 (QQLQQLERIWQQRAANQLMEK) form a linker region. Positions 254-461 (GATLADANRF…WKRPVKRERD (208 aa)) are N-acetyltransferase. UDP-N-acetyl-alpha-D-glucosamine-binding residues include Arg336 and Lys354. Catalysis depends on His366, which acts as the Proton acceptor. Residues Tyr369 and Asn380 each coordinate UDP-N-acetyl-alpha-D-glucosamine. Acetyl-CoA is bound by residues Ala383, 389 to 390 (NY), Ser408, and Ala426.

The protein in the N-terminal section; belongs to the N-acetylglucosamine-1-phosphate uridyltransferase family. In the C-terminal section; belongs to the transferase hexapeptide repeat family. In terms of assembly, homotrimer. Requires Mg(2+) as cofactor.

It localises to the cytoplasm. The enzyme catalyses alpha-D-glucosamine 1-phosphate + acetyl-CoA = N-acetyl-alpha-D-glucosamine 1-phosphate + CoA + H(+). It carries out the reaction N-acetyl-alpha-D-glucosamine 1-phosphate + UTP + H(+) = UDP-N-acetyl-alpha-D-glucosamine + diphosphate. The protein operates within nucleotide-sugar biosynthesis; UDP-N-acetyl-alpha-D-glucosamine biosynthesis; N-acetyl-alpha-D-glucosamine 1-phosphate from alpha-D-glucosamine 6-phosphate (route II): step 2/2. It functions in the pathway nucleotide-sugar biosynthesis; UDP-N-acetyl-alpha-D-glucosamine biosynthesis; UDP-N-acetyl-alpha-D-glucosamine from N-acetyl-alpha-D-glucosamine 1-phosphate: step 1/1. Its pathway is bacterial outer membrane biogenesis; LPS lipid A biosynthesis. Functionally, catalyzes the last two sequential reactions in the de novo biosynthetic pathway for UDP-N-acetylglucosamine (UDP-GlcNAc). The C-terminal domain catalyzes the transfer of acetyl group from acetyl coenzyme A to glucosamine-1-phosphate (GlcN-1-P) to produce N-acetylglucosamine-1-phosphate (GlcNAc-1-P), which is converted into UDP-GlcNAc by the transfer of uridine 5-monophosphate (from uridine 5-triphosphate), a reaction catalyzed by the N-terminal domain. This chain is Bifunctional protein GlmU, found in Legionella pneumophila subsp. pneumophila (strain Philadelphia 1 / ATCC 33152 / DSM 7513).